The primary structure comprises 840 residues: MTQVTVKELAQVVDTPVERLLLQMRDAGLPHTSAEQVVTDSEKQALLTHLKGSHGDRASEPRKITLQRKTTTTLKVGGSKTVSVEVRKKKTYVKRSPDEIEAERQRELEEQRAAEEAERLKAEEAAARQRAEEEARKAEEAARAKAAQEAAATAGAEPAVVADVAAAEPVAKPAAVEERKKEEPRRAPKRDEDDDRRDRKHTQHRPSVKEKEKVPAPRVAPRSTDEESDGYRRGGRGGKSKLKKRNQHGFQNPTGPIVREVNIGETITVAELAAQMSVKGAEVVKFMFKMGSPVTINQVLDQETAQLVAEELGHKVKLVSENALEEQLAESLKFEGEAVTRAPVVTVMGHVDHGKTSLLDYIRRAKVAAGEAGGITQHIGAYHVETERGMVTFLDTPGHAAFTAMRARGAQATDIVILVVAADDGVMPQTQEAVQHAKAAGVPIVVAVNKIDKPEANPDNIKNGLAALDVIPEEWGGDAPFVPVSAKLGTGVDELLEAVLLQAEVLELKATPSAPGRGVVVESRLDKGRGPVATVLVQDGTLRQGDMVLVGINYGRVRAMLDENGKPIKEAGPSIPVEILGLDGTPDAGDEMTVVADEKKAREVALFRQGKFREVKLARAHAGKLENIFENMGQEEKKTLNIVLKADVRGSLEALQGSLSGLGNDEVQVRVVGGGVGGITESDANLALASNAVLFGFNVRADAGARKIVEAEGLDMRYYNVIYDIIEDVKKALTGMLGSDLRENILGIAEVRDVFRSPKFGAIAGCMVTEGMVHRNRPIRVLRDDVVIFEGELESLRRFKDDVAEVRAGMECGIGVKSYNDVKVGDKIEVFEKVEVARSL.

Disordered stretches follow at residues 94-157 (KRSP…AGAE) and 169-256 (PVAK…PTGP). A compositionally biased stretch (basic and acidic residues) spans 95 to 143 (RSPDEIEAERQRELEEQRAAEEAERLKAEEAAARQRAEEEARKAEEAAR). Residues 144 to 157 (AKAAQEAAATAGAE) are compositionally biased toward low complexity. Composition is skewed to basic and acidic residues over residues 175–191 (AVEE…PKRD) and 223–232 (STDEESDGYR). A compositionally biased stretch (basic residues) spans 233–247 (RGGRGGKSKLKKRNQ). A tr-type G domain is found at 340–509 (TRAPVVTVMG…LLQAEVLELK (170 aa)). Positions 349 to 356 (GHVDHGKT) are G1. Position 349–356 (349–356 (GHVDHGKT)) interacts with GTP. A G2 region spans residues 374 to 378 (GITQH). Residues 395-398 (DTPG) form a G3 region. Residues 395 to 399 (DTPGH) and 449 to 452 (NKID) contribute to the GTP site. The tract at residues 449–452 (NKID) is G4. A G5 region spans residues 485–487 (SAK).

This sequence belongs to the TRAFAC class translation factor GTPase superfamily. Classic translation factor GTPase family. IF-2 subfamily.

It localises to the cytoplasm. Its function is as follows. One of the essential components for the initiation of protein synthesis. Protects formylmethionyl-tRNA from spontaneous hydrolysis and promotes its binding to the 30S ribosomal subunits. Also involved in the hydrolysis of GTP during the formation of the 70S ribosomal complex. This is Translation initiation factor IF-2 from Pseudomonas aeruginosa (strain UCBPP-PA14).